The sequence spans 633 residues: Probable alkaline/neutral invertase A, chloroplastic (633 aa).

A chloroplast-targeting transit peptide spans 1–71; sequence MNAITFLGNS…TNAVPFCTDR (71 aa). Residue Ser623 is modified to Phosphoserine.

Belongs to the glycosyl hydrolase 100 family. In terms of tissue distribution, expressed in flowers.

The protein localises to the plastid. It is found in the chloroplast. The catalysed reaction is Hydrolysis of terminal non-reducing beta-D-fructofuranoside residues in beta-D-fructofuranosides.. Its function is as follows. Chloroplastic invertase that cleaves sucrose into glucose and fructose and may participate in the carbon flux between the cytosol and plastids in leaves. This is Probable alkaline/neutral invertase A, chloroplastic from Arabidopsis thaliana (Mouse-ear cress).